The chain runs to 424 residues: Probable methyltransferase EP424R (424 aa).

The 213-residue stretch at 104–316 folds into the Adrift-type SAM-dependent 2'-O-MTase domain; that stretch reads QIVTNAWLKM…TYIVGKNRLR (213 aa). S-adenosyl-L-methionine-binding residues include G136 and D229. The Proton acceptor role is filled by K269.

It localises to the virion. The sequence is that of Probable methyltransferase EP424R from African swine fever virus (strain Badajoz 1971 Vero-adapted) (Ba71V).